Consider the following 252-residue polypeptide: Phosphonates import ATP-binding protein PhnC 1 (252 aa).

The ABC transporter domain maps to 2–244 (ISLNKLGVTY…QLEEIYQTLS (243 aa)). 35–42 (GSSGAGKS) is a binding site for ATP.

Belongs to the ABC transporter superfamily. Phosphonates importer (TC 3.A.1.9.1) family. The complex is composed of two ATP-binding proteins (PhnC), two transmembrane proteins (PhnE) and a solute-binding protein (PhnD).

It localises to the cell inner membrane. The enzyme catalyses phosphonate(out) + ATP + H2O = phosphonate(in) + ADP + phosphate + H(+). Part of the ABC transporter complex PhnCDE involved in phosphonates import. Responsible for energy coupling to the transport system. This Trichodesmium erythraeum (strain IMS101) protein is Phosphonates import ATP-binding protein PhnC 1.